Consider the following 463-residue polypeptide: Type I restriction enzyme StySPI specificity subunit (463 aa).

It belongs to the type-I restriction system S methylase family. As to quaternary structure, the type I restriction/modification system is composed of three polypeptides R, M and S; the restriction enzyme has stoichiometry R(2)M(2)S(1) while the methyltransferase is M(2)S(1).

The specificity (S) subunit of a type I restriction enzyme; this subunit dictates DNA sequence specificity. The M and S subunits together form a methyltransferase (MTase) that methylates A-2 on the top strand and A-3 on the bottom strand of the sequence 5'-AACN(6)GTRC-3'. In the presence of the R subunit the complex can also act as an endonuclease, binding to the same target sequence but cutting the DNA some distance from this site. Whether the DNA is cut or modified depends on the methylation state of the target sequence. When the target site is unmodified, the DNA is cut. When the target site is hemimethylated, the complex acts as a maintenance MTase modifying the DNA so that both strands become methylated. After locating a non-methylated recognition site, the enzyme complex serves as a molecular motor that translocates DNA in an ATP-dependent manner until a collision occurs that triggers cleavage. In Salmonella potsdam, this protein is Type I restriction enzyme StySPI specificity subunit.